The following is a 328-amino-acid chain: Ferredoxin--NADP reductase 1 (328 aa).

Residues Asp-28, Gln-36, Tyr-41, Ala-81, Ile-116, Asp-277, and Ser-320 each contribute to the FAD site.

This sequence belongs to the ferredoxin--NADP reductase type 2 family. Homodimer. FAD is required as a cofactor.

It carries out the reaction 2 reduced [2Fe-2S]-[ferredoxin] + NADP(+) + H(+) = 2 oxidized [2Fe-2S]-[ferredoxin] + NADPH. The sequence is that of Ferredoxin--NADP reductase 1 from Sulfolobus acidocaldarius (strain ATCC 33909 / DSM 639 / JCM 8929 / NBRC 15157 / NCIMB 11770).